Here is a 128-residue protein sequence, read N- to C-terminus: Large ribosomal subunit protein bL17 (128 aa).

It belongs to the bacterial ribosomal protein bL17 family. In terms of assembly, part of the 50S ribosomal subunit. Contacts protein L32.

In Ehrlichia ruminantium (strain Gardel), this protein is Large ribosomal subunit protein bL17.